The following is a 283-amino-acid chain: uncharacterized protein (283 aa).

A glycan (N-linked (GlcNAc...) asparagine) is linked at N15. The PQ-loop 1 domain maps to 15 to 81 (NATASTVFAI…QELNIALKVQ (67 aa)). Helical transmembrane passes span 19–39 (STVF…PQII), 48–68 (EGLD…LSVY), 108–128 (ALFV…MLIL), 138–158 (VEWP…IGFL), 170–190 (VTGI…FSFL), and 206–226 (GLLF…NVLL). Residues 149–204 (ATVLVNIGFLPQYISIFRARAVTGISYLFLAIDSSGSLFSFLSLPFDRWDVLAAVD) form the PQ-loop 2 domain. N228 carries N-linked (GlcNAc...) asparagine glycosylation.

The protein localises to the membrane. This is an uncharacterized protein from Schizosaccharomyces pombe (strain 972 / ATCC 24843) (Fission yeast).